The sequence spans 330 residues: Aspartate--ammonia ligase (330 aa).

The protein belongs to the class-II aminoacyl-tRNA synthetase family. AsnA subfamily.

It localises to the cytoplasm. The enzyme catalyses L-aspartate + NH4(+) + ATP = L-asparagine + AMP + diphosphate + H(+). Its pathway is amino-acid biosynthesis; L-asparagine biosynthesis; L-asparagine from L-aspartate (ammonia route): step 1/1. The polypeptide is Aspartate--ammonia ligase (Streptococcus equi subsp. zooepidemicus (strain H70)).